A 109-amino-acid chain; its full sequence is Large ribosomal subunit protein uL24 (109 aa).

This sequence belongs to the universal ribosomal protein uL24 family. In terms of assembly, part of the 50S ribosomal subunit.

One of two assembly initiator proteins, it binds directly to the 5'-end of the 23S rRNA, where it nucleates assembly of the 50S subunit. In terms of biological role, one of the proteins that surrounds the polypeptide exit tunnel on the outside of the subunit. The sequence is that of Large ribosomal subunit protein uL24 from Syntrophotalea carbinolica (strain DSM 2380 / NBRC 103641 / GraBd1) (Pelobacter carbinolicus).